The primary structure comprises 1830 residues: Dedicator of cytokinesis protein 2 (1830 aa).

Positions Asp8–Val69 constitute an SH3 domain. Lys304 bears the N6-acetyllysine mark. Residues Arg423–Cys607 enclose the C2 DOCK-type domain. Phosphoserine is present on residues Ser588 and Ser593. Residue Lys738 is modified to N6-acetyllysine. The interval Cys939–Pro1476 is interaction with CRKL. The DOCKER domain maps to Tyr1211–Met1622. Positions Met1651–Ser1665 are enriched in polar residues. The tract at residues Met1651 to Arg1704 is disordered. Residues Ser1685, Ser1706, Ser1731, and Ser1784 each carry the phosphoserine modification.

It belongs to the DOCK family. In terms of assembly, homodimer. Interacts with RAC1 and RAC2. Interacts with CRKL and VAV. Interacts with CD3Z. In terms of tissue distribution, specifically expressed in hematopoietic cells. Highly expressed in peripheral blood leukocytes, and expressed at intermediate level in thymus and spleen. Expressed at very low level in the small intestine and colon.

It localises to the endomembrane system. The protein localises to the cytoplasm. The protein resides in the cytoskeleton. In terms of biological role, involved in cytoskeletal rearrangements required for lymphocyte migration in response of chemokines. Activates RAC1 and RAC2, but not CDC42, by functioning as a guanine nucleotide exchange factor (GEF), which exchanges bound GDP for free GTP. May also participate in IL2 transcriptional activation via the activation of RAC2. This chain is Dedicator of cytokinesis protein 2 (DOCK2), found in Homo sapiens (Human).